The primary structure comprises 71 residues: MSGMGVLLLVLLLVMPLAAFHQDGEGEATRRSGGLKRDCPTSCPTTCANGWECCKGYPCVRQHCSGCNHGK.

The first 19 residues, 1 to 19 (MSGMGVLLLVLLLVMPLAA), serve as a signal peptide directing secretion. Positions 20-35 (FHQDGEGEATRRSGGL) are excised as a propeptide. 4-hydroxyproline occurs at positions 40 and 44. Residue Trp-51 is modified to 6'-bromotryptophan. Residue Glu-52 is modified to 4-carboxyglutamate. Lys-55 bears the 5-hydroxylysine mark. 4-hydroxyproline is present on Pro-58. At His-69 the chain carries Histidine amide.

This sequence belongs to the conotoxin G superfamily. Contains 4 disulfide bonds. As to expression, expressed by the venom duct.

It is found in the secreted. The protein is Conotoxin De13.1 of Conasprella delessertii (Sozon's cone).